The following is an 871-amino-acid chain: Leucine--tRNA ligase (871 aa).

A 'HIGH' region motif is present at residues 42-52 (PYPSGSLHMGH). The 'KMSKS' region motif lies at 634–638 (TMSKS). Lysine 637 is a binding site for ATP.

This sequence belongs to the class-I aminoacyl-tRNA synthetase family.

It localises to the cytoplasm. It carries out the reaction tRNA(Leu) + L-leucine + ATP = L-leucyl-tRNA(Leu) + AMP + diphosphate. The chain is Leucine--tRNA ligase from Nostoc punctiforme (strain ATCC 29133 / PCC 73102).